A 148-amino-acid chain; its full sequence is Lysozyme C (148 aa).

An N-terminal signal peptide occupies residues 1 to 18 (MKALIILGLVLLSVTVQG). Positions 19-148 (KIFERCELAR…VSQYVKGCGV (130 aa)) constitute a C-type lysozyme domain. 4 disulfides stabilise this stretch: C24–C146, C48–C134, C83–C99, and C95–C113. Active-site residues include E53 and D71.

This sequence belongs to the glycosyl hydrolase 22 family. Monomer.

It is found in the secreted. It catalyses the reaction Hydrolysis of (1-&gt;4)-beta-linkages between N-acetylmuramic acid and N-acetyl-D-glucosamine residues in a peptidoglycan and between N-acetyl-D-glucosamine residues in chitodextrins.. Its function is as follows. Lysozymes have primarily a bacteriolytic function; those in tissues and body fluids are associated with the monocyte-macrophage system and enhance the activity of immunoagents. This Nasalis larvatus (Proboscis monkey) protein is Lysozyme C (LYZ).